The chain runs to 560 residues: Putative transport protein VFMJ11_0927 (560 aa).

Transmembrane regions (helical) follow at residues 8–28 (LLSQ…LFIA), 37–57 (LGSS…GYTF), 66–86 (FMLF…GIFL), 94–114 (LLVL…GHYF), and 161–181 (NLSV…ILLA). RCK C-terminal domains are found at residues 203-292 (RGIG…FRNG) and 293-376 (KEVF…KIGF). 5 helical membrane-spanning segments follow: residues 386–406 (LLAF…TMSF), 409–429 (VTFG…LGFL), 451–471 (GLLV…NEYF), 478–498 (VLAA…LVGA), and 539–559 (AGTY…MILL).

Belongs to the AAE transporter (TC 2.A.81) family. YbjL subfamily.

The protein resides in the cell membrane. In Aliivibrio fischeri (strain MJ11) (Vibrio fischeri), this protein is Putative transport protein VFMJ11_0927.